The chain runs to 306 residues: Homeobox protein Hox-C13a (306 aa).

A disordered region spans residues 68–90 (SVYSDISSPDTGRQCPAPQTSSS). A DNA-binding region (homeobox) is located at residues 236 to 295 (GRKKRVPYTKLQLKELEKEYAASKFITKDKRRRISAATNLSERQVTIWFQNRRVKEKKFI).

It belongs to the Abd-B homeobox family.

The protein localises to the nucleus. Functionally, sequence-specific transcription factor which is part of a developmental regulatory system that provides cells with specific positional identities on the anterior-posterior axis. The chain is Homeobox protein Hox-C13a (hoxc13a) from Takifugu rubripes (Japanese pufferfish).